The sequence spans 237 residues: Flagellar L-ring protein (237 aa).

The signal sequence occupies residues 1-24 (MNRPGFPRFSVLIASLCGITLLSG). A lipid anchor (N-palmitoyl cysteine) is attached at Cys-25. The S-diacylglycerol cysteine moiety is linked to residue Cys-25.

Belongs to the FlgH family. In terms of assembly, the basal body constitutes a major portion of the flagellar organelle and consists of four rings (L,P,S, and M) mounted on a central rod.

The protein localises to the cell outer membrane. The protein resides in the bacterial flagellum basal body. In terms of biological role, assembles around the rod to form the L-ring and probably protects the motor/basal body from shearing forces during rotation. The chain is Flagellar L-ring protein from Pseudomonas syringae pv. tomato (strain ATCC BAA-871 / DC3000).